Consider the following 143-residue polypeptide: Large ribosomal subunit protein uL11 (143 aa).

This sequence belongs to the universal ribosomal protein uL11 family. Part of the ribosomal stalk of the 50S ribosomal subunit. Interacts with L10 and the large rRNA to form the base of the stalk. L10 forms an elongated spine to which L12 dimers bind in a sequential fashion forming a multimeric L10(L12)X complex. In terms of processing, one or more lysine residues are methylated.

Forms part of the ribosomal stalk which helps the ribosome interact with GTP-bound translation factors. The chain is Large ribosomal subunit protein uL11 from Chromobacterium violaceum (strain ATCC 12472 / DSM 30191 / JCM 1249 / CCUG 213 / NBRC 12614 / NCIMB 9131 / NCTC 9757 / MK).